Reading from the N-terminus, the 502-residue chain is ATP synthase subunit alpha (502 aa).

169-176 (GDRQTGKT) lines the ATP pocket.

This sequence belongs to the ATPase alpha/beta chains family. As to quaternary structure, F-type ATPases have 2 components, CF(1) - the catalytic core - and CF(0) - the membrane proton channel. CF(1) has five subunits: alpha(3), beta(3), gamma(1), delta(1), epsilon(1). CF(0) has three main subunits: a(1), b(2) and c(9-12). The alpha and beta chains form an alternating ring which encloses part of the gamma chain. CF(1) is attached to CF(0) by a central stalk formed by the gamma and epsilon chains, while a peripheral stalk is formed by the delta and b chains.

It localises to the cell membrane. The enzyme catalyses ATP + H2O + 4 H(+)(in) = ADP + phosphate + 5 H(+)(out). Its function is as follows. Produces ATP from ADP in the presence of a proton gradient across the membrane. The alpha chain is a regulatory subunit. In Exiguobacterium sp. (strain ATCC BAA-1283 / AT1b), this protein is ATP synthase subunit alpha.